A 1291-amino-acid polypeptide reads, in one-letter code: Period circadian protein homolog 1 (1291 aa).

The interval 1–134 (MSGPLEGADG…SSEQSARART (134 aa)) is disordered. The interval 1 to 151 (MSGPLEGADG…LRELKLRLPP (151 aa)) is interaction with BTRC. Over residues 48–115 (NSNGSSGNES…AYSLLSASSE (68 aa)) the composition is skewed to low complexity. The span at 116–132 (QDNPSTSGCSSEQSARA) shows a compositional bias: polar residues. Thr121 bears the Phosphothreonine; by CSNK1E mark. Phosphoserine; by CSNK1E is present on residues Ser122 and Ser126. Positions 138-147 (LMTALRELKL) match the Nuclear export signal 1 motif. PAS domains are found at residues 208 to 275 (ITSE…PSRL) and 348 to 414 (YEAP…KILQ). A PAC domain is found at 422 to 465 (HSPIRFCARNGEYVTMDTSWAGFVHPWSRKVAFVLGRHKVRTAP). Residues 489 to 498 (LSEQIHRLLL) carry the Nuclear export signal 2 motif. Disordered stretches follow at residues 508-544 (GLCG…PAPV) and 647-698 (TKRK…KEPV). Composition is skewed to low complexity over residues 513–533 (GPLM…SNGG) and 652–662 (ASSSSYTASSA). Positions 596–815 (ELEVAPVPDQ…GLDTSSVAPS (220 aa)) are required for phosphorylation by CSNK1E. A phosphoserine mark is found at Ser661, Ser663, and Ser704. Disordered stretches follow at residues 749–772 (GLAP…TPDA), 809–873 (TSSV…PPAT), and 938–1037 (SQAP…ALSG). Over residues 751-769 (APGPAPSPAPSPTVAPDPT) the composition is skewed to pro residues. Phosphoserine is present on Ser815. Positions 824–840 (IPPGRRHHCRSKAKRSR) match the Nuclear localization signal motif. Basic residues predominate over residues 827 to 846 (GRRHHCRSKAKRSRHHHHQT). Composition is skewed to pro residues over residues 859–873 (SPVP…PPAT) and 955–965 (PSLPPPPLSPP). Over residues 973-985 (FNSRCSSPLQLNL) the composition is skewed to polar residues. Residues Ser978 and Ser979 each carry the phosphoserine modification. Residues 981–988 (LQLNLLQL) carry the Nuclear export signal 3 motif. The short motif at 1042–1046 (LELLL) is the LXXLL element. The segment covering 1051–1061 (RSGTGSAASGS) has biased composition (low complexity). 2 disordered regions span residues 1051-1099 (RSGT…YFGS) and 1207-1291 (SVQD…NSTS). A compositionally biased stretch (gly residues) spans 1062-1076 (LGSGLGSGSGSGSHE). The segment covering 1077-1094 (GGSTSASITRSSQSSHTS) has biased composition (low complexity). The CRY binding domain stretch occupies residues 1148–1291 (SRDAASVLKQ…ALPAEENSTS (144 aa)). The segment covering 1235–1248 (GEGGGCGVGGGGGD) has biased composition (gly residues). Residues 1253 to 1267 (AQTQIGAKGSSSQDS) show a composition bias toward polar residues.

Homodimer. Component of the circadian core oscillator, which includes the CRY proteins, CLOCK or NPAS2, BMAL1 or BMAL2, CSNK1D and/or CSNK1E, TIMELESS, and the PER proteins. Interacts directly with TIMELESS. Interacts directly with PER2, PER3, CRY1 and CRY2. Interacts with BMAL1 and CLOCK. Interacts with GPRASP1. Interacts (phosphorylated) with BTRC and FBXW11; the interactions trigger proteasomal degradation. Interacts with NONO and SFPQ. Interacts with WDR5. Interacts with U2AF1L4 (Isoform 3). Interacts with USP2. Interacts with HNF4A. Post-translationally, phosphorylated on serine residues by CSNK1D, CSNK1E and probably also by CSNK1G2. Phosphorylation by CSNK1D or CSNK1E promotes nuclear location of PER proteins as well as ubiquitination and subsequent degradation. May be dephosphorylated by PP1. Ubiquitinated; requires phosphorylation by CSNK1E and interaction with BTRC and FBXW11. Deubiquitinated by USP2. In brain, highest expression is observed in the SCN. Highly expressed in the pyramidal cell layer of the piriform cortex, the periventricular part of the caudate-putamen, many thalamic nuclei, and the granular layer of the cerebellar cortex. Weaker expression is detected in most area of the brain, including cortical and non cortical structures. Expression but no oscillations occurs in the glomerular and mitral cell layers of the olfactory bulb, the internal granular layer of the cerebellum, the cornu ammonis and dentate gyrus of the hippocampus, the cerebral and piriform cortices. Expressed in the renal cortex (at protein level). Also found in heart, brain, bladder, lumbar spinal cord, spleen, lung, liver, skeletal muscle and testis.

Its subcellular location is the nucleus. The protein localises to the cytoplasm. Functionally, transcriptional repressor which forms a core component of the circadian clock. The circadian clock, an internal time-keeping system, regulates various physiological processes through the generation of approximately 24 hour circadian rhythms in gene expression, which are translated into rhythms in metabolism and behavior. It is derived from the Latin roots 'circa' (about) and 'diem' (day) and acts as an important regulator of a wide array of physiological functions including metabolism, sleep, body temperature, blood pressure, endocrine, immune, cardiovascular, and renal function. Consists of two major components: the central clock, residing in the suprachiasmatic nucleus (SCN) of the brain, and the peripheral clocks that are present in nearly every tissue and organ system. Both the central and peripheral clocks can be reset by environmental cues, also known as Zeitgebers (German for 'timegivers'). The predominant Zeitgeber for the central clock is light, which is sensed by retina and signals directly to the SCN. The central clock entrains the peripheral clocks through neuronal and hormonal signals, body temperature and feeding-related cues, aligning all clocks with the external light/dark cycle. Circadian rhythms allow an organism to achieve temporal homeostasis with its environment at the molecular level by regulating gene expression to create a peak of protein expression once every 24 hours to control when a particular physiological process is most active with respect to the solar day. Transcription and translation of core clock components (CLOCK, NPAS2, BMAL1, BMAL2, PER1, PER2, PER3, CRY1 and CRY2) plays a critical role in rhythm generation, whereas delays imposed by post-translational modifications (PTMs) are important for determining the period (tau) of the rhythms (tau refers to the period of a rhythm and is the length, in time, of one complete cycle). A diurnal rhythm is synchronized with the day/night cycle, while the ultradian and infradian rhythms have a period shorter and longer than 24 hours, respectively. Disruptions in the circadian rhythms contribute to the pathology of cardiovascular diseases, cancer, metabolic syndromes and aging. A transcription/translation feedback loop (TTFL) forms the core of the molecular circadian clock mechanism. Transcription factors, CLOCK or NPAS2 and BMAL1 or BMAL2, form the positive limb of the feedback loop, act in the form of a heterodimer and activate the transcription of core clock genes and clock-controlled genes (involved in key metabolic processes), harboring E-box elements (5'-CACGTG-3') within their promoters. The core clock genes: PER1/2/3 and CRY1/2 which are transcriptional repressors form the negative limb of the feedback loop and interact with the CLOCK|NPAS2-BMAL1|BMAL2 heterodimer inhibiting its activity and thereby negatively regulating their own expression. This heterodimer also activates nuclear receptors NR1D1/2 and RORA/B/G, which form a second feedback loop and which activate and repress BMAL1 transcription, respectively. Regulates circadian target genes expression at post-transcriptional levels, but may not be required for the repression at transcriptional level. Controls PER2 protein decay. Represses CRY2 preventing its repression on CLOCK/BMAL1 target genes such as FXYD5 and SCNN1A in kidney and PPARA in liver. Besides its involvement in the maintenance of the circadian clock, has an important function in the regulation of several processes. Participates in the repression of glucocorticoid receptor NR3C1/GR-induced transcriptional activity by reducing the association of NR3C1/GR to glucocorticoid response elements (GREs) by BMAL1:CLOCK. Plays a role in the modulation of the neuroinflammatory state via the regulation of inflammatory mediators release, such as CCL2 and IL6. In spinal astrocytes, negatively regulates the MAPK14/p38 and MAPK8/JNK MAPK cascades as well as the subsequent activation of NFkappaB. Coordinately regulates the expression of multiple genes that are involved in the regulation of renal sodium reabsorption. Can act as gene expression activator in a gene and tissue specific manner, in kidney enhances WNK1 and SLC12A3 expression in collaboration with CLOCK. Modulates hair follicle cycling. Represses the CLOCK-BMAL1 induced transcription of BHLHE40/DEC1. The polypeptide is Period circadian protein homolog 1 (Per1) (Mus musculus (Mouse)).